The chain runs to 133 residues: Ubiquitin-like FUBI-ribosomal protein eS30 fusion protein (133 aa).

The Ubiquitin-like domain occupies 1–74; the sequence is MQLFVRAQEL…LEVAGRMLGG (74 aa). The segment at 84-110 is disordered; the sequence is GKVRGQTPKVAKQEKKKKKTGRAKRRM. Residues 97-110 show a composition bias toward basic residues; the sequence is EKKKKKTGRAKRRM. Position 125 is an N6-succinyllysine (lysine 125).

It in the N-terminal section; belongs to the ubiquitin family. The protein in the C-terminal section; belongs to the eukaryotic ribosomal protein eS30 family. In terms of assembly, component of the 40S subunit of the ribosome. FUBI is cleaved from ribosomal protein S30 by the deubiquitinase USP36 before the assembly of ribosomal protein S30 into pre-40S ribosomal particles. FUBI removal from ribosomal protein S30 is a crucial event for the final maturation of pre-40S particles.

It localises to the cytoplasm. The protein localises to the nucleus. May have pro-apoptotic activity. Its function is as follows. Component of the 40S subunit of the ribosome. Contributes to the assembly and function of 40S ribosomal subunits. The sequence is that of Ubiquitin-like FUBI-ribosomal protein eS30 fusion protein from Homo sapiens (Human).